The sequence spans 261 residues: Cytochrome c oxidase subunit 3 (261 aa).

Residues 1–15 are Mitochondrial matrix-facing; it reads MTHQTHAYHMVNPSP. The helical transmembrane segment at 16–34 threads the bilayer; that stretch reads WPLTGALSALLMTSGLIMW. The Mitochondrial intermembrane portion of the chain corresponds to 35–40; the sequence is FHFNST. Residues 41–66 traverse the membrane as a helical segment; the sequence is TLLMLGLTTNMLTMYQWWRDVIREST. Over 67–72 the chain is Mitochondrial matrix; sequence FQGHHT. A helical transmembrane segment spans residues 73 to 105; the sequence is PNVQKGLRYGMILFIISEVLFFTGFFWAFYHSS. The Mitochondrial intermembrane segment spans residues 106-128; sequence LAPTPELGGCWPPTGIHPLNPLE. Residues 129–152 form a helical membrane-spanning segment; that stretch reads VPLLNTSVLLASGVSITWAHHSLM. Residues 153–155 are Mitochondrial matrix-facing; that stretch reads EGN. A helical membrane pass occupies residues 156 to 183; it reads RNHMLQALFITIALGVYFTLLQASEYYE. Residues 184-190 are Mitochondrial intermembrane-facing; it reads APFTISD. A helical membrane pass occupies residues 191–223; the sequence is GVYGSTFFVATGFHGLHVIIGSTFLIVCFFRQL. The Mitochondrial matrix portion of the chain corresponds to 224-232; sequence KFHFTSSHH. A helical transmembrane segment spans residues 233–256; that stretch reads FGFEAAAWYWHFVDVVWLFLYVSI. The Mitochondrial intermembrane portion of the chain corresponds to 257 to 261; it reads YWWGS.

The protein belongs to the cytochrome c oxidase subunit 3 family. Component of the cytochrome c oxidase (complex IV, CIV), a multisubunit enzyme composed of 14 subunits. The complex is composed of a catalytic core of 3 subunits MT-CO1, MT-CO2 and MT-CO3, encoded in the mitochondrial DNA, and 11 supernumerary subunits COX4I, COX5A, COX5B, COX6A, COX6B, COX6C, COX7A, COX7B, COX7C, COX8 and NDUFA4, which are encoded in the nuclear genome. The complex exists as a monomer or a dimer and forms supercomplexes (SCs) in the inner mitochondrial membrane with NADH-ubiquinone oxidoreductase (complex I, CI) and ubiquinol-cytochrome c oxidoreductase (cytochrome b-c1 complex, complex III, CIII), resulting in different assemblies (supercomplex SCI(1)III(2)IV(1) and megacomplex MCI(2)III(2)IV(2)).

Its subcellular location is the mitochondrion inner membrane. The catalysed reaction is 4 Fe(II)-[cytochrome c] + O2 + 8 H(+)(in) = 4 Fe(III)-[cytochrome c] + 2 H2O + 4 H(+)(out). Component of the cytochrome c oxidase, the last enzyme in the mitochondrial electron transport chain which drives oxidative phosphorylation. The respiratory chain contains 3 multisubunit complexes succinate dehydrogenase (complex II, CII), ubiquinol-cytochrome c oxidoreductase (cytochrome b-c1 complex, complex III, CIII) and cytochrome c oxidase (complex IV, CIV), that cooperate to transfer electrons derived from NADH and succinate to molecular oxygen, creating an electrochemical gradient over the inner membrane that drives transmembrane transport and the ATP synthase. Cytochrome c oxidase is the component of the respiratory chain that catalyzes the reduction of oxygen to water. Electrons originating from reduced cytochrome c in the intermembrane space (IMS) are transferred via the dinuclear copper A center (CU(A)) of subunit 2 and heme A of subunit 1 to the active site in subunit 1, a binuclear center (BNC) formed by heme A3 and copper B (CU(B)). The BNC reduces molecular oxygen to 2 water molecules using 4 electrons from cytochrome c in the IMS and 4 protons from the mitochondrial matrix. In Gazella bennettii (Chinkara), this protein is Cytochrome c oxidase subunit 3 (MT-CO3).